We begin with the raw amino-acid sequence, 869 residues long: DNA mismatch repair protein MutS (869 aa).

Gly-602–Ser-609 provides a ligand contact to ATP.

Belongs to the DNA mismatch repair MutS family.

This protein is involved in the repair of mismatches in DNA. It is possible that it carries out the mismatch recognition step. This protein has a weak ATPase activity. The sequence is that of DNA mismatch repair protein MutS from Bacillus licheniformis (strain ATCC 14580 / DSM 13 / JCM 2505 / CCUG 7422 / NBRC 12200 / NCIMB 9375 / NCTC 10341 / NRRL NRS-1264 / Gibson 46).